A 490-amino-acid chain; its full sequence is Hippocampus abundant transcript 1 protein (490 aa).

An N-acetylmethionine modification is found at methionine 1. Over 1–40 (MTQGKKKKRAANRSIMLAKKIIIKDGGTPQGIGSPSVYHA) the chain is Extracellular. An N-linked (GlcNAc...) asparagine glycan is attached at asparagine 12. The chain crosses the membrane as a helical span at residues 41-61 (VIVIFLEFFAWGLLTAPTLVV). Over 62 to 74 (LHETFPKHTFLMN) the chain is Cytoplasmic. A helical transmembrane segment spans residues 75 to 95 (GLIQGVKGLLSFLSAPLIGAL). At 96–103 (SDVWGRKS) the chain is on the extracellular side. The chain crosses the membrane as a helical span at residues 104–124 (FLLLTVFFTCAPIPLMKISPW). The Cytoplasmic segment spans residues 125-126 (WY). A helical transmembrane segment spans residues 127 to 147 (FAVISVSGVFAVTFSVVFAYV). Topologically, residues 148 to 160 (ADITQEHERSMAY) are extracellular. The chain crosses the membrane as a helical span at residues 161-181 (GLVSATFAASLVTSPAIGAYL). Topologically, residues 182–188 (GRVYGDS) are cytoplasmic. The helical transmembrane segment at 189-209 (LVVVLATAIALLDICFILVAV) threads the bilayer. Residues 210–243 (PESLPEKMRPASWGAPISWEQADPFASLKKVGQD) are Extracellular-facing. A helical membrane pass occupies residues 244–264 (SIVLLICITVFLSYLPEAGQY). The Cytoplasmic portion of the chain corresponds to 265–284 (SSFFLYLRQIMKFSPESVAA). Residues 285–305 (FIAVLGILSIIAQTIVLSLLM) traverse the membrane as a helical segment. The Extracellular portion of the chain corresponds to 306–313 (RSIGNKNT). Residues 314 to 334 (ILLGLGFQILQLAWYGFGSEP) form a helical membrane-spanning segment. The Cytoplasmic portion of the chain corresponds to 335–337 (WMM). The helical transmembrane segment at 338 to 358 (WAAGAVAAMSSITFPAVSALV) threads the bilayer. The Extracellular portion of the chain corresponds to 359–379 (SRTADADQQGVVQGMITGIRG). The chain crosses the membrane as a helical span at residues 380–400 (LCNGLGPALYGFIFYIFHVEL). The Cytoplasmic segment spans residues 401–427 (KELPITGTDLGTNTSPQHHFEQNSIIP). The chain crosses the membrane as a helical span at residues 428–448 (GPPFLFGACSVLLALLVALFI). Residues 449 to 490 (PEHTNLSLRSSSWRKHCGSHSHPHSTQAPGEAKEPLLQDTNV) are Extracellular-facing. Asparagine 453 carries N-linked (GlcNAc...) asparagine glycosylation. Residues 466 to 490 (GSHSHPHSTQAPGEAKEPLLQDTNV) are disordered.

Belongs to the major facilitator superfamily. Expressed in various tissues.

It localises to the membrane. This chain is Hippocampus abundant transcript 1 protein, found in Mus musculus (Mouse).